Here is an 826-residue protein sequence, read N- to C-terminus: U4/U6 snRNA-associated-splicing factor PRP24 (826 aa).

RRM domains lie at Thr310–Gly385, Ile386–Pro463, Arg477–Ser554, and Arg598–Gln670.

It localises to the nucleus. Functionally, functions as a recycling factor of the spliceosome, a machinery that forms on each precursor-messenger RNA (pre-mRNA) and catalyzes the removal of introns. Chaperones the re-annealing of U4 and U6 snRNAs (small nuclear RNAs) released from previous rounds of splicing, an initial step in reforming the U4/U6-U5 tri-snRNP (small nuclear ribonucleoprotein) that can reassemble into another spliceosome complex; this step involves binding U6 and facilitating the unwinding of the U6 internal stem loop, followed by base-pairing of U6 to U4. The protein is U4/U6 snRNA-associated-splicing factor PRP24 of Ophiostoma ulmi (Dutch elm disease fungus).